A 429-amino-acid chain; its full sequence is Glycine betaine monooxygenase oxygenase subunit (429 aa).

Residues Trp56–Ile163 form the Rieske domain. 4 residues coordinate [2Fe-2S] cluster: Cys98, His100, Cys118, and His121. Fe cation contacts are provided by His217 and His222.

This sequence belongs to the bacterial ring-hydroxylating dioxygenase alpha subunit family. In terms of assembly, the system is composed of an oxygenase subunit (GbcA) and a reductase subunit (GbcB). Requires [2Fe-2S] cluster as cofactor. It depends on Fe cation as a cofactor.

It carries out the reaction glycine betaine + NADH + O2 + H(+) = N,N-dimethylglycine + formaldehyde + NAD(+) + H2O. Its function is as follows. Involved in degradation of glycine betaine. Part of a Rieske-type oxygenase system that catalyzes the conversion of glycine betaine (GB) to dimethylglycine (DMG). This subunit is the terminal oxygenase component of the system. This Pseudomonas aeruginosa (strain UCBPP-PA14) protein is Glycine betaine monooxygenase oxygenase subunit.